A 106-amino-acid polypeptide reads, in one-letter code: uncharacterized protein (106 aa).

It belongs to the csb family.

This is an uncharacterized protein from Dictyostelium discoideum (Social amoeba).